We begin with the raw amino-acid sequence, 210 residues long: Large ribosomal subunit protein uL3 (210 aa).

The interval 123-144 (KRHGQSRGPMAHGSRYHRRPGS) is disordered.

It belongs to the universal ribosomal protein uL3 family. As to quaternary structure, part of the 50S ribosomal subunit. Forms a cluster with proteins L14 and L19.

In terms of biological role, one of the primary rRNA binding proteins, it binds directly near the 3'-end of the 23S rRNA, where it nucleates assembly of the 50S subunit. In Alkaliphilus metalliredigens (strain QYMF), this protein is Large ribosomal subunit protein uL3.